Consider the following 521-residue polypeptide: Type-2 serine--tRNA ligase (521 aa).

Residue alanine 316 participates in L-serine binding. Residue cysteine 318 coordinates Zn(2+). L-serine is bound at residue arginine 347. ATP is bound by residues 347 to 349 (RWE) and 358 to 359 (RV). Residue 364 to 366 (RVE) participates in L-serine binding. Positions 366 and 473 each coordinate Zn(2+). Arginine 480 lines the ATP pocket.

The protein belongs to the class-II aminoacyl-tRNA synthetase family. Type-2 seryl-tRNA synthetase subfamily. Homodimer. It depends on Zn(2+) as a cofactor.

The protein resides in the cytoplasm. The enzyme catalyses tRNA(Ser) + L-serine + ATP = L-seryl-tRNA(Ser) + AMP + diphosphate + H(+). It catalyses the reaction tRNA(Sec) + L-serine + ATP = L-seryl-tRNA(Sec) + AMP + diphosphate + H(+). It participates in aminoacyl-tRNA biosynthesis; selenocysteinyl-tRNA(Sec) biosynthesis; L-seryl-tRNA(Sec) from L-serine and tRNA(Sec): step 1/1. Functionally, catalyzes the attachment of serine to tRNA(Ser). Is also able to aminoacylate tRNA(Sec) with serine, to form the misacylated tRNA L-seryl-tRNA(Sec), which will be further converted into selenocysteinyl-tRNA(Sec). This Methanocaldococcus jannaschii (strain ATCC 43067 / DSM 2661 / JAL-1 / JCM 10045 / NBRC 100440) (Methanococcus jannaschii) protein is Type-2 serine--tRNA ligase (serS).